A 201-amino-acid polypeptide reads, in one-letter code: Probable GTP-binding protein EngB (201 aa).

One can recognise an EngB-type G domain in the interval 22–197 (RLPEYAFIGR…LDYIDSINQE (176 aa)). Residues 30–37 (GRSNVGKS), 57–61 (GKTQL), 75–78 (DLPG), 142–145 (TKAD), and 173–178 (VFITSS) contribute to the GTP site. The Mg(2+) site is built by S37 and T59.

It belongs to the TRAFAC class TrmE-Era-EngA-EngB-Septin-like GTPase superfamily. EngB GTPase family. Requires Mg(2+) as cofactor.

Necessary for normal cell division and for the maintenance of normal septation. The polypeptide is Probable GTP-binding protein EngB (Porphyromonas gingivalis (strain ATCC 33277 / DSM 20709 / CIP 103683 / JCM 12257 / NCTC 11834 / 2561)).